Consider the following 126-residue polypeptide: Small ribosomal subunit protein bS6 (126 aa).

The segment at 101–126 (VMMKAKEERSAKREDAAPRAEEAAAE) is disordered. The segment covering 104 to 126 (KAKEERSAKREDAAPRAEEAAAE) has biased composition (basic and acidic residues).

Belongs to the bacterial ribosomal protein bS6 family.

Functionally, binds together with bS18 to 16S ribosomal RNA. The chain is Small ribosomal subunit protein bS6 from Aliivibrio fischeri (strain ATCC 700601 / ES114) (Vibrio fischeri).